Consider the following 73-residue polypeptide: Large ribosomal subunit protein bL31 (73 aa).

It belongs to the bacterial ribosomal protein bL31 family. Type A subfamily. In terms of assembly, part of the 50S ribosomal subunit.

Binds the 23S rRNA. In Rhizobium rhizogenes (strain K84 / ATCC BAA-868) (Agrobacterium radiobacter), this protein is Large ribosomal subunit protein bL31.